A 202-amino-acid chain; its full sequence is Small ribosomal subunit protein uS4 (202 aa).

A disordered region spans residues Leu15–Arg42. The S4 RNA-binding domain maps to Ser90–Asn152.

The protein belongs to the universal ribosomal protein uS4 family. In terms of assembly, part of the 30S ribosomal subunit. Contacts protein S5. The interaction surface between S4 and S5 is involved in control of translational fidelity.

Its function is as follows. One of the primary rRNA binding proteins, it binds directly to 16S rRNA where it nucleates assembly of the body of the 30S subunit. Functionally, with S5 and S12 plays an important role in translational accuracy. This is Small ribosomal subunit protein uS4 from Synechococcus sp. (strain CC9902).